We begin with the raw amino-acid sequence, 148 residues long: D-aminoacyl-tRNA deacylase (148 aa).

Residues 137-138 carry the Gly-cisPro motif, important for rejection of L-amino acids motif; it reads GP.

Belongs to the DTD family. As to quaternary structure, homodimer.

The protein localises to the cytoplasm. It catalyses the reaction glycyl-tRNA(Ala) + H2O = tRNA(Ala) + glycine + H(+). The enzyme catalyses a D-aminoacyl-tRNA + H2O = a tRNA + a D-alpha-amino acid + H(+). Functionally, an aminoacyl-tRNA editing enzyme that deacylates mischarged D-aminoacyl-tRNAs. Also deacylates mischarged glycyl-tRNA(Ala), protecting cells against glycine mischarging by AlaRS. Acts via tRNA-based rather than protein-based catalysis; rejects L-amino acids rather than detecting D-amino acids in the active site. By recycling D-aminoacyl-tRNA to D-amino acids and free tRNA molecules, this enzyme counteracts the toxicity associated with the formation of D-aminoacyl-tRNA entities in vivo and helps enforce protein L-homochirality. This chain is D-aminoacyl-tRNA deacylase, found in Finegoldia magna (strain ATCC 29328 / DSM 20472 / WAL 2508) (Peptostreptococcus magnus).